Here is a 736-residue protein sequence, read N- to C-terminus: Serine/threonine-protein kinase BRSK2 (736 aa).

One can recognise a Protein kinase domain in the interval 19-270 (YRLEKTLGKG…LEHIQKHIWY (252 aa)). ATP contacts are provided by residues 25–33 (LGKGQTGLV) and K48. The Proton acceptor role is filled by D141. T174 carries the post-translational modification Phosphothreonine; by LKB1. T260 carries the post-translational modification Phosphothreonine; by PKA. Residue S294 is modified to Phosphoserine. A UBA domain is found at 297 to 339 (DIDPDVLDSMHSLGCFRDRNKLLQDLLSEEENQEKMIYFLLLD). The segment covering 345 to 366 (PSQEDEDLPPRNEIDPPRKRVD) has biased composition (basic and acidic residues). Disordered stretches follow at residues 345–475 (PSQE…GVPW) and 493–513 (HRRKLQVPTPEEMSNLTPESS). Phosphoserine occurs at positions 367, 382, 393, 412, 416, 423, and 427. Over residues 410–428 (SRSISGASSGLSTSPLSSP) the composition is skewed to low complexity. Pro residues predominate over residues 431 to 445 (TPHPSPRGSPLPTPK). At S455 the chain carries Phosphoserine. Residues T459, T463, and T509 each carry the phosphothreonine modification. Phosphoserine is present on residues S512, S513, and S520. A KEN box motif is present at residues 603–605 (KEN). The tract at residues 681–736 (KNGQAAQAPSTPAKRSAHGPLGDSAAAGPGPGGDAEYPTGKDTAKMGPPTARREQP) is disordered. A compositionally biased stretch (low complexity) spans 699 to 708 (GPLGDSAAAG).

The protein belongs to the protein kinase superfamily. CAMK Ser/Thr protein kinase family. SNF1 subfamily. In terms of assembly, interacts with FZR1, a regulatory subunit of the APC ubiquitin ligase complex. Interacts with COPS5. Interacts with PAK1. Mg(2+) serves as cofactor. Post-translationally, phosphorylated at Thr-174 by STK11/LKB1 in complex with STE20-related adapter-alpha (STRADA) pseudo kinase and CAB39. Not phosphorylated at Thr-174 by CaMKK2. In contrast, it is phosphorylated and activated by CaMKK1. May be inactivated via dephosphorylation of Thr-174 by PP2C. Phosphorylated at Thr-260 by PKA. Phosphorylation at Thr-260 by PKA was not observed in another study, but this may reflect differences in the experimental approach. Phosphorylation at Thr-260 seems to play a role in the regulation of insulin secretion. In terms of processing, polyubiquitinated by the APC complex in conjunction with FZR1, leading to its proteasomal degradation. Targeted for proteasomal degradation by interaction with COPS5. BRSK2 levels change during the cell cycle. BRSK2 levels are low at the G1/S boundary and gradually increase as cells progress into G2 phase. BRSK2 levels decrease rapidly at the end of mitosis. As to expression, detected in pancreas islets (at protein level).

It is found in the cytoplasm. The protein resides in the cytoskeleton. Its subcellular location is the microtubule organizing center. It localises to the centrosome. The protein localises to the perinuclear region. It is found in the endoplasmic reticulum. The enzyme catalyses L-seryl-[protein] + ATP = O-phospho-L-seryl-[protein] + ADP + H(+). It carries out the reaction L-threonyl-[protein] + ATP = O-phospho-L-threonyl-[protein] + ADP + H(+). The catalysed reaction is L-seryl-[tau protein] + ATP = O-phospho-L-seryl-[tau protein] + ADP + H(+). It catalyses the reaction L-threonyl-[tau protein] + ATP = O-phospho-L-threonyl-[tau protein] + ADP + H(+). With respect to regulation, activated by phosphorylation on Thr-174 by STK11/LKB1. Its function is as follows. Serine/threonine-protein kinase that plays a key role in polarization of neurons and axonogenesis, cell cycle progress and insulin secretion. Phosphorylates CDK16, CDC25C, MAPT/TAU, PAK1 and WEE1. Following phosphorylation and activation by STK11/LKB1, acts as a key regulator of polarization of cortical neurons, probably by mediating phosphorylation of microtubule-associated proteins such as MAPT/TAU at 'Thr-529' and 'Ser-579'. Also regulates neuron polarization by mediating phosphorylation of WEE1 at 'Ser-642' in postmitotic neurons, leading to down-regulate WEE1 activity in polarized neurons. Plays a role in the regulation of the mitotic cell cycle progress and the onset of mitosis. Plays a role in the regulation of insulin secretion in response to elevated glucose levels, probably via phosphorylation of CDK16 and PAK1. While BRSK2 phosphorylated at Thr-174 can inhibit insulin secretion, BRSK2 phosphorylated at Thr-260 can promote insulin secretion. Regulates reorganization of the actin cytoskeleton. May play a role in the apoptotic response triggered by endoplasmic reticulum (ER) stress. The sequence is that of Serine/threonine-protein kinase BRSK2 (BRSK2) from Homo sapiens (Human).